Consider the following 312-residue polypeptide: Protein lon-1 (312 aa).

The first 18 residues, 1 to 18 (MNYLLTALIALLAPISVA), serve as a signal peptide directing secretion. The SCP domain occupies 87-209 (EHNRYRRMVP…GHRNVFVCHY (123 aa)). Residue asparagine 142 is glycosylated (N-linked (GlcNAc...) asparagine). Residues 265-284 (TTTTESTTTSTTTEEPTTTC) show a composition bias toward low complexity. Residues 265–312 (TTTTESTTTSTTTEEPTTTCEPDEPEAEGADNNQEEEEENNDGFRMRV) form a disordered region. Over residues 285 to 305 (EPDEPEAEGADNNQEEEEENN) the composition is skewed to acidic residues.

The protein belongs to the CRISP family. Expressed in hypodermal tissues.

In terms of biological role, regulates body size morphogenesis, but does not affect male tail development. This is Protein lon-1 (lon-1) from Caenorhabditis elegans.